The primary structure comprises 504 residues: MSFSVDVLANIAIELQRGIGHQDRFQRLITTLRQVLECDASALLRYDSRQFIPLAIDGLAKDVLGRRFALEGHPRLEAIARAGDVVRFPADSELPDPYDGLIPGQESLKVHACVGLPLFAGQNLIGALTLDGMQPDQFDVFSDEELRLIAALAAGALSNALLIEQLESQNMLPGDAAPFEAVKQTQMIGLSPGMTQLKKEIEIVAASDLNVLISGETGTGKELVAKAIHEASPRAVNPLVYLNCAALPESVAESELFGHVKGAFTGAISNRSGKFEMADNGTLFLDEIGELSLALQAKLLRVLQYGDIQRVGDDRSLRVDVRVLAATNRDLREEVLAGRFRADLFHRLSVFPLSVPPLRERGDDVILLAGYFCEQCRLRLGLSRVVLSAGARNLLQHYNFPGNVRELEHAIHRAVVLSRATRSGDEVILEAQHFAFPEVTLPPPEAAAVPVVKQNLREATEAFQRETIRQALAQNHHNWAACARMLETDVANLHRLAKRLGLKD.

4-aspartylphosphate is present on Asp-57. Positions 187–416 (MIGLSPGMTQ…LEHAIHRAVV (230 aa)) constitute a Sigma-54 factor interaction domain. ATP contacts are provided by residues 215 to 222 (GETGTGKE) and 278 to 287 (ADNGTLFLDE). A DNA-binding region (H-T-H motif) is located at residues 479-498 (WAACARMLETDVANLHRLAK).

The protein operates within nitrogen metabolism; nitric oxide reduction. In terms of biological role, required for the expression of anaerobic nitric oxide (NO) reductase, acts as a transcriptional activator for at least the norVW operon. Activation also requires sigma-54. The polypeptide is Anaerobic nitric oxide reductase transcription regulator NorR (Escherichia coli O45:K1 (strain S88 / ExPEC)).